The chain runs to 379 residues: Carbamoyl phosphate synthase small chain (379 aa).

The segment at 1–183 (MTSQDRSEAV…EAYVVEPDGE (183 aa)) is CPSase. 3 residues coordinate L-glutamine: Ser-51, Gly-235, and Gly-237. The Glutamine amidotransferase type-1 domain maps to 185–379 (LYTVVAYDMG…FVELIQANKK (195 aa)). Catalysis depends on Cys-263, which acts as the Nucleophile. Residues Phe-264, Gln-267, Asn-305, Gly-307, and Phe-308 each contribute to the L-glutamine site. Catalysis depends on residues His-353 and Glu-355.

The protein belongs to the CarA family. In terms of assembly, composed of two chains; the small (or glutamine) chain promotes the hydrolysis of glutamine to ammonia, which is used by the large (or ammonia) chain to synthesize carbamoyl phosphate. Tetramer of heterodimers (alpha,beta)4.

The catalysed reaction is hydrogencarbonate + L-glutamine + 2 ATP + H2O = carbamoyl phosphate + L-glutamate + 2 ADP + phosphate + 2 H(+). It catalyses the reaction L-glutamine + H2O = L-glutamate + NH4(+). It functions in the pathway amino-acid biosynthesis; L-arginine biosynthesis; carbamoyl phosphate from bicarbonate: step 1/1. It participates in pyrimidine metabolism; UMP biosynthesis via de novo pathway; (S)-dihydroorotate from bicarbonate: step 1/3. Its function is as follows. Small subunit of the glutamine-dependent carbamoyl phosphate synthetase (CPSase). CPSase catalyzes the formation of carbamoyl phosphate from the ammonia moiety of glutamine, carbonate, and phosphate donated by ATP, constituting the first step of 2 biosynthetic pathways, one leading to arginine and/or urea and the other to pyrimidine nucleotides. The small subunit (glutamine amidotransferase) binds and cleaves glutamine to supply the large subunit with the substrate ammonia. The sequence is that of Carbamoyl phosphate synthase small chain from Corynebacterium diphtheriae (strain ATCC 700971 / NCTC 13129 / Biotype gravis).